The sequence spans 332 residues: Cysteine and histidine-rich domain-containing protein 1 (332 aa).

N-acetylalanine is present on Ala2. Positions 2–77 are interaction with PPP5C; it reads ALLCYNRGCG…KPPEPVKPEV (76 aa). Positions 5, 10, 24, 27, 42, and 43 each coordinate Zn(2+). CHORD domains are found at residues 5 to 64 and 157 to 216; these read CYNR…KGRH and CKNG…TGKH. The residue at position 47 (Thr47) is a Phosphothreonine. Ser51 is subject to Phosphoserine. Cys59, His64, Cys157, Cys162, Cys176, His179, Cys194, Cys195, Cys211, and His216 together coordinate Zn(2+). The segment at 62–82 is disordered; sequence GRHNSEKPPEPVKPEVKTTEK. Over residues 64-82 the composition is skewed to basic and acidic residues; that stretch reads HNSEKPPEPVKPEVKTTEK. An interaction with HSP90AA1 and HSP90AB1 region spans residues 65–316; it reads NSEKPPEPVK…AEPMQWASLE (252 aa). In terms of domain architecture, CS spans 227–316; the sequence is VVPCRHDWHQ…AEPMQWASLE (90 aa).

As to quaternary structure, interacts with HSP90AA1, HSP90AB1, PPP5C, ROCK1 and ROCK2.

Functionally, regulates centrosome duplication, probably by inhibiting the kinase activity of ROCK2. Proposed to act as co-chaperone for HSP90. May play a role in the regulation of NOD1 via a HSP90 chaperone complex. In vitro, has intrinsic chaperone activity. This function may be achieved by inhibiting association of ROCK2 with NPM1. Plays a role in ensuring the localization of the tyrosine kinase receptor EGFR to the plasma membrane, and thus ensures the subsequent regulation of EGFR activity and EGF-induced actin cytoskeleton remodeling. Involved in stress response. Prevents tumorigenesis. In Bos taurus (Bovine), this protein is Cysteine and histidine-rich domain-containing protein 1 (CHORDC1).